The sequence spans 338 residues: mRNA decay activator protein ZFP36L1 (338 aa).

Residues 1 to 111 (MTTTLVSATI…QKQPGSGQVN (111 aa)) are necessary and sufficient for the association with mRNA decay enzymes and mRNA decay activation. Residue Ser54 is modified to Phosphoserine; by MAPKAPK2. Ser90 carries the post-translational modification Phosphoserine; by PKB/AKT1. Ser92 is modified (phosphoserine; by PKB/AKT1 and MAPKAPK2). The tract at residues 93 to 113 (EGGERLLPTQKQPGSGQVNSS) is disordered. Positions 101–113 (TQKQPGSGQVNSS) are enriched in polar residues. C3H1-type zinc fingers lie at residues 114–142 (RYKT…HGIH) and 152–180 (KYKT…HNAE). Positions 185–338 (LAGGRDLSAD…IFSRLSISDD (154 aa)) are necessary for mRNA decay activation. Residue Ser203 is modified to Phosphoserine; by PKB/AKT1 and MAPKAPK2. Residues 273-338 (SPTTFLFRPM…IFSRLSISDD (66 aa)) are disordered. The segment covering 305–318 (YLSSSSSSHSGSDS) has biased composition (low complexity). Ser318 carries the phosphoserine modification. Ser334 carries the phosphoserine; by RPS6KA1 modification.

In terms of assembly, associates with the cytoplasmic CCR4-NOT deadenylase and RNA exosome complexes to trigger ARE-containing mRNA deadenylation and decay processes. Interacts with CNOT1. Interacts (via N-terminus) with CNOT6. Interacts with CNOT7; this interaction is inhibited in response to phorbol 12-myristate 13-acetate (PMA) treatment in a p38 MAPK-dependent manner. Interacts with DCP1A. Interacts (via N-terminus) with DCP2. Interacts (via N-terminus) with EXOSC2. Interacts with XRN1. Interacts (via phosphorylated form) with YWHAB; this interaction occurs in a protein kinase AKT1-dependent manner. Interacts (via phosphorylated form) with YWHAZ; this interaction occurs in a p38 MAPK- and AKT-signaling pathways. Post-translationally, phosphorylated. Phosphorylated by RPS6KA1 at Ser-334 upon phorbol 12-myristate 13-acetate (PMA) treatment; this phosphorylation results in dissociation of the CCR4-NOT deadenylase complex and induces p38 MAPK-mediated stabilization of the low-density lipoprotein receptor LDLR mRNA. Phosphorylated by protein kinase AKT1 at Ser-92 and Ser-203 in response to insulin; these phosphorylations stabilize ZFP36L1, increase the association with 14-3-3 proteins and mediate ARE-containing mRNA stabilization. AKT1-mediated phosphorylation at Ser-92 does not impair ARE-containing RNA-binding. Phosphorylated at Ser-54, Ser-92 and Ser-203 by MAPKAPK2; these phosphorylations increase the association with 14-3-3 proteins and mediate ARE-containing mRNA stabilization in a protein kinase AKT1-independent manner. MAPKAPK2-mediated phosphorylations at Ser-54, Ser-92 and Ser-203 do not impair ARE-containing RNA-binding. Phosphorylations increase the association with 14-3-3 proteins and mediate ARE-containing mRNA stabilization during early adipogenesis in a p38 MAPK- and AKT-dependent manner. Phosphorylated by protein kinase AKT1 at Ser-92. Ubiquitinated. Ubiquitination leads to proteasomal degradation, a process inhibited by phosphorylations at Ser-90, Ser-92 and Ser-203.

It is found in the nucleus. It localises to the cytoplasm. Its subcellular location is the cytoplasmic granule. The protein localises to the P-body. Functionally, zinc-finger RNA-binding protein that destabilizes several cytoplasmic AU-rich element (ARE)-containing mRNA transcripts by promoting their poly(A) tail removal or deadenylation, and hence provide a mechanism for attenuating protein synthesis. Acts as a 3'-untranslated region (UTR) ARE mRNA-binding adapter protein to communicate signaling events to the mRNA decay machinery. Functions by recruiting the CCR4-NOT deadenylase complex and components of the cytoplasmic RNA decay machinery to the bound ARE-containing mRNAs, and hence promotes ARE-mediated mRNA deadenylation and decay processes. Also induces the degradation of ARE-containing mRNAs even in absence of poly(A) tail. Binds to 3'-UTR ARE of numerous mRNAs. Positively regulates early adipogenesis by promoting ARE-mediated mRNA decay of immediate early genes (IEGs). Promotes ARE-mediated mRNA decay of mineralocorticoid receptor NR3C2 mRNA in response to hypertonic stress. Negatively regulates hematopoietic/erythroid cell differentiation by promoting ARE-mediated mRNA decay of the transcription factor STAT5B mRNA. Positively regulates monocyte/macrophage cell differentiation by promoting ARE-mediated mRNA decay of the cyclin-dependent kinase CDK6 mRNA. Promotes degradation of ARE-containing pluripotency-associated mRNAs in embryonic stem cells (ESCs), such as NANOG, through a fibroblast growth factor (FGF)-induced MAPK-dependent signaling pathway, and hence attenuates ESC self-renewal and positively regulates mesendoderm differentiation. May play a role in mediating pro-apoptotic effects in malignant B-cells by promoting ARE-mediated mRNA decay of BCL2 mRNA. In association with ZFP36L2 maintains quiescence on developing B lymphocytes by promoting ARE-mediated decay of several mRNAs encoding cell cycle regulators that help B cells progress through the cell cycle, and hence ensuring accurate variable-diversity-joining (VDJ) recombination and functional immune cell formation. Together with ZFP36L2 is also necessary for thymocyte development and prevention of T-cell acute lymphoblastic leukemia (T-ALL) transformation by promoting ARE-mediated mRNA decay of the oncogenic transcription factor NOTCH1 mRNA. Participates in the delivery of target ARE-mRNAs to processing bodies (PBs). In addition to its cytosolic mRNA-decay function, plays a role in the regulation of nuclear mRNA 3'-end processing; modulates mRNA 3'-end maturation efficiency of the DLL4 mRNA through binding with an ARE embedded in a weak noncanonical polyadenylation (poly(A)) signal in endothelial cells. Also involved in the regulation of stress granule (SG) and P-body (PB) formation and fusion. Plays a role in vasculogenesis and endocardial development. Plays a role in the regulation of keratinocyte proliferation, differentiation and apoptosis. Plays a role in myoblast cell differentiation. The protein is mRNA decay activator protein ZFP36L1 of Rattus norvegicus (Rat).